We begin with the raw amino-acid sequence, 86 residues long: Small ribosomal subunit protein bS20 (86 aa).

The segment at 1–25 (MANIKSQIKRIRTNEKARQRNKAYK) is disordered. The span at 12–25 (RTNEKARQRNKAYK) shows a compositional bias: basic and acidic residues.

Belongs to the bacterial ribosomal protein bS20 family.

Its function is as follows. Binds directly to 16S ribosomal RNA. The chain is Small ribosomal subunit protein bS20 from Beutenbergia cavernae (strain ATCC BAA-8 / DSM 12333 / CCUG 43141 / JCM 11478 / NBRC 16432 / NCIMB 13614 / HKI 0122).